The primary structure comprises 126 residues: Large ribosomal subunit protein bL12 (126 aa).

Belongs to the bacterial ribosomal protein bL12 family. Homodimer. Part of the ribosomal stalk of the 50S ribosomal subunit. Forms a multimeric L10(L12)X complex, where L10 forms an elongated spine to which 2 to 4 L12 dimers bind in a sequential fashion. Binds GTP-bound translation factors.

Forms part of the ribosomal stalk which helps the ribosome interact with GTP-bound translation factors. Is thus essential for accurate translation. The polypeptide is Large ribosomal subunit protein bL12 (Methylobacterium nodulans (strain LMG 21967 / CNCM I-2342 / ORS 2060)).